The chain runs to 75 residues: uncharacterized protein (75 aa).

It is found in the plastid. The protein localises to the chloroplast. This is an uncharacterized protein from Calycanthus floridus var. glaucus (Eastern sweetshrub).